The sequence spans 293 residues: Undecaprenyl-diphosphatase (293 aa).

7 helical membrane passes run 3–23 (IALA…EFLP), 43–63 (KGKI…CWEF), 85–105 (LNVI…GKAI), 109–129 (LFNP…ILWA), 203–223 (VATE…TVYE), 238–258 (IFGI…RWLL), and 269–289 (FAWY…THLI).

It belongs to the UppP family.

The protein resides in the cell inner membrane. The enzyme catalyses di-trans,octa-cis-undecaprenyl diphosphate + H2O = di-trans,octa-cis-undecaprenyl phosphate + phosphate + H(+). Catalyzes the dephosphorylation of undecaprenyl diphosphate (UPP). Confers resistance to bacitracin. This chain is Undecaprenyl-diphosphatase, found in Ralstonia nicotianae (strain ATCC BAA-1114 / GMI1000) (Ralstonia solanacearum).